Reading from the N-terminus, the 306-residue chain is Phospho-N-acetylmuramoyl-pentapeptide-transferase (306 aa).

The next 10 helical transmembrane spans lie at 2–22, 47–67, 71–91, 105–125, 131–151, 162–182, 185–205, 209–229, 236–256, and 284–304; these read IALL…LKYW, SGTP…FLFF, FFIS…DLKL, IFLS…DYKI, LIID…IAVP, GLAG…SFHF, IALE…FNSH, IFMG…LSVV, LIFL…QVFF, and IVWR…VLWY.

This sequence belongs to the glycosyltransferase 4 family. MraY subfamily. Mg(2+) is required as a cofactor.

It localises to the cell inner membrane. It catalyses the reaction UDP-N-acetyl-alpha-D-muramoyl-L-alanyl-gamma-D-glutamyl-meso-2,6-diaminopimeloyl-D-alanyl-D-alanine + di-trans,octa-cis-undecaprenyl phosphate = di-trans,octa-cis-undecaprenyl diphospho-N-acetyl-alpha-D-muramoyl-L-alanyl-D-glutamyl-meso-2,6-diaminopimeloyl-D-alanyl-D-alanine + UMP. Its pathway is cell wall biogenesis; peptidoglycan biosynthesis. In terms of biological role, catalyzes the initial step of the lipid cycle reactions in the biosynthesis of the cell wall peptidoglycan: transfers peptidoglycan precursor phospho-MurNAc-pentapeptide from UDP-MurNAc-pentapeptide onto the lipid carrier undecaprenyl phosphate, yielding undecaprenyl-pyrophosphoryl-MurNAc-pentapeptide, known as lipid I. The chain is Phospho-N-acetylmuramoyl-pentapeptide-transferase from Dictyoglomus thermophilum (strain ATCC 35947 / DSM 3960 / H-6-12).